The sequence spans 107 residues: Putative double-stranded DNA mimic protein CGSHiGG_01135 (107 aa).

This sequence belongs to the putative dsDNA mimic protein family.

In terms of biological role, may act as a double-stranded DNA (dsDNA) mimic. Probably regulates the activity of a dsDNA-binding protein. The polypeptide is Putative double-stranded DNA mimic protein CGSHiGG_01135 (Haemophilus influenzae (strain PittGG)).